The sequence spans 93 residues: Integration host factor subunit beta (93 aa).

The interval 59–93 is disordered; the sequence is RVGRNPKTGQSVSLDGKFVPHFKPGKELRDRVNDD. The segment covering 82–93 has biased composition (basic and acidic residues); it reads PGKELRDRVNDD.

It belongs to the bacterial histone-like protein family. In terms of assembly, heterodimer of an alpha and a beta chain.

This protein is one of the two subunits of integration host factor, a specific DNA-binding protein that functions in genetic recombination as well as in transcriptional and translational control. The polypeptide is Integration host factor subunit beta (Stutzerimonas stutzeri (strain A1501) (Pseudomonas stutzeri)).